Here is a 142-residue protein sequence, read N- to C-terminus: Nitrogen fixation protein NifU 2 (142 aa).

Positions 1 to 36 are disordered; it reads MKDLFDESLTLDTGSAAPGTAPGRPRRRQPAGGKAP. Over residues 14–23 the composition is skewed to low complexity; that stretch reads GSAAPGTAPG.

The protein belongs to the NifU family.

May be involved in the formation or repair of [Fe-S] clusters present in iron-sulfur proteins. This is Nitrogen fixation protein NifU 2 (nifU2) from Rhodobacter capsulatus (Rhodopseudomonas capsulata).